We begin with the raw amino-acid sequence, 101 residues long: A-type ATP synthase subunit F (101 aa).

The protein belongs to the V-ATPase F subunit family. In terms of assembly, has multiple subunits with at least A(3), B(3), C, D, E, F, H, I and proteolipid K(x).

It is found in the cell membrane. In terms of biological role, component of the A-type ATP synthase that produces ATP from ADP in the presence of a proton gradient across the membrane. The polypeptide is A-type ATP synthase subunit F (Methanosarcina acetivorans (strain ATCC 35395 / DSM 2834 / JCM 12185 / C2A)).